The primary structure comprises 335 residues: Methionine import ATP-binding protein MetN (335 aa).

The region spanning 2–241 (IQFQRLHKSY…PQHPTTRRFV (240 aa)) is the ABC transporter domain. 38 to 45 (GHSGAGKS) is an ATP binding site.

The protein belongs to the ABC transporter superfamily. Methionine importer (TC 3.A.1.24) family. As to quaternary structure, the complex is composed of two ATP-binding proteins (MetN), two transmembrane proteins (MetI) and a solute-binding protein (MetQ).

It localises to the cell inner membrane. It carries out the reaction L-methionine(out) + ATP + H2O = L-methionine(in) + ADP + phosphate + H(+). The catalysed reaction is D-methionine(out) + ATP + H2O = D-methionine(in) + ADP + phosphate + H(+). Functionally, part of the ABC transporter complex MetNIQ involved in methionine import. Responsible for energy coupling to the transport system. This is Methionine import ATP-binding protein MetN from Xanthomonas campestris pv. campestris (strain 8004).